Reading from the N-terminus, the 426-residue chain is Serine protease HTRA2, mitochondrial (426 aa).

Low complexity predominate over residues 31–58; that stretch reads SSTCNSTNTDNGSHNTNYNSSNNNNNNN. Residues 31 to 59 are disordered; that stretch reads SSTCNSTNTDNGSHNTNYNSSNNNNNNND. Residues 71–87 traverse the membrane as a helical segment; sequence FLVPFSLGALASSVVAG. An IAP-binding motif is present at residues 79 to 82; it reads ALAS. The segment at 143–306 is serine protease; the sequence is SNGSGFVIEQ…IPIDYVKLFL (164 aa). Active-site charge relay system residues include H161, D193, and S270. Positions 329-414 constitute a PDZ domain; sequence MGITMLTLTP…DLDMVILRGV (86 aa).

The protein belongs to the peptidase S1C family. Interacts with th/DIAP1 (via BIR 2 domain).

It localises to the mitochondrion intermembrane space. The protein resides in the mitochondrion membrane. The enzyme catalyses Cleavage of non-polar aliphatic amino-acids at the P1 position, with a preference for Val, Ile and Met. At the P2 and P3 positions, Arg is selected most strongly with a secondary preference for other hydrophilic residues.. In terms of biological role, serine protease that shows proteolytic activity against a non-specific substrate beta-casein. Promotes or induces cell death either by direct binding to and inhibition of BIRC proteins (also called inhibitor of apoptosis proteins, IAPs), leading to an increase in caspase activity, or by a BIRC inhibition-independent, caspase-independent and serine protease activity-dependent mechanism. Can antagonize antiapoptotic activity of th/Diap1 by directly inducing the degradation of th/Diap1. This chain is Serine protease HTRA2, mitochondrial, found in Drosophila grimshawi (Hawaiian fruit fly).